A 213-amino-acid chain; its full sequence is 3-demethoxyubiquinol 3-hydroxylase (213 aa).

E62, E92, H95, E144, E176, and H179 together coordinate Fe cation.

It belongs to the COQ7 family. Fe cation is required as a cofactor.

It localises to the cell membrane. It carries out the reaction a 5-methoxy-2-methyl-3-(all-trans-polyprenyl)benzene-1,4-diol + AH2 + O2 = a 3-demethylubiquinol + A + H2O. It participates in cofactor biosynthesis; ubiquinone biosynthesis. In terms of biological role, catalyzes the hydroxylation of 2-nonaprenyl-3-methyl-6-methoxy-1,4-benzoquinol during ubiquinone biosynthesis. This is 3-demethoxyubiquinol 3-hydroxylase from Legionella pneumophila (strain Paris).